Here is a 350-residue protein sequence, read N- to C-terminus: tRNA uridine(34) hydroxylase (350 aa).

In terms of domain architecture, Rhodanese spans 146–240 (DDPDAVFIDM…YARRAREQGL (95 aa)). Catalysis depends on cysteine 200, which acts as the Cysteine persulfide intermediate. Residues 319–328 (RRRRAGRENG) are compositionally biased toward basic and acidic residues. The disordered stretch occupies residues 319–350 (RRRRAGRENGNKIFNKSRGRLNSKLSIPDPAE).

Belongs to the TrhO family.

It catalyses the reaction uridine(34) in tRNA + AH2 + O2 = 5-hydroxyuridine(34) in tRNA + A + H2O. Functionally, catalyzes oxygen-dependent 5-hydroxyuridine (ho5U) modification at position 34 in tRNAs. This is tRNA uridine(34) hydroxylase from Salmonella agona (strain SL483).